Reading from the N-terminus, the 270-residue chain is Phosphatidylglycerol--prolipoprotein diacylglyceryl transferase (270 aa).

7 helical membrane passes run 10-30 (VAVA…LVGI), 56-76 (LIFW…VLFY), 92-112 (WKGG…AWWF), 120-140 (FFQL…AGRI), 175-195 (SQLY…NLYA), 202-222 (MAVS…VEFV), and 237-257 (VTMG…LIWL). Residue R139 coordinates a 1,2-diacyl-sn-glycero-3-phospho-(1'-sn-glycerol).

The protein belongs to the Lgt family.

It localises to the cell inner membrane. It carries out the reaction L-cysteinyl-[prolipoprotein] + a 1,2-diacyl-sn-glycero-3-phospho-(1'-sn-glycerol) = an S-1,2-diacyl-sn-glyceryl-L-cysteinyl-[prolipoprotein] + sn-glycerol 1-phosphate + H(+). It participates in protein modification; lipoprotein biosynthesis (diacylglyceryl transfer). Catalyzes the transfer of the diacylglyceryl group from phosphatidylglycerol to the sulfhydryl group of the N-terminal cysteine of a prolipoprotein, the first step in the formation of mature lipoproteins. In Pseudomonas savastanoi pv. phaseolicola (strain 1448A / Race 6) (Pseudomonas syringae pv. phaseolicola (strain 1448A / Race 6)), this protein is Phosphatidylglycerol--prolipoprotein diacylglyceryl transferase.